The following is a 170-amino-acid chain: uncharacterized protein (170 aa).

Residues 96 to 116 (FSAISIGSFPIVLFLSLFFFD) traverse the membrane as a helical segment.

It is found in the membrane. This is an uncharacterized protein from Borreliella burgdorferi (strain ATCC 35210 / DSM 4680 / CIP 102532 / B31) (Borrelia burgdorferi).